Reading from the N-terminus, the 933-residue chain is Phospholipase SGR2 (933 aa).

The segment covering 1 to 14 (MEDRETHLGTREVN) has biased composition (basic and acidic residues). The disordered stretch occupies residues 1 to 22 (MEDRETHLGTREVNETSPDLLK). The active site involves Ser444. Disordered stretches follow at residues 475–517 (PDEE…GQDN) and 553–598 (RGGQ…ESVN). The span at 505 to 517 (QLNNPEKITGQDN) shows a compositional bias: polar residues. The span at 553–563 (RGGQEDDHHDS) shows a compositional bias: basic and acidic residues. Residues 593-631 (DKESVNSNNEERIKLLQDEVNSLRSKVAQLLSENARILS) are a coiled coil. One can recognise a DDHD domain in the interval 669–868 (LEFKVDTFFA…ALFIIKHLYR (200 aa)). The interval 871-903 (PDGPNSPTESTEGDDSPKDSSRPHSWIDRREAD) is disordered. Residues 885–902 (DSPKDSSRPHSWIDRREA) show a composition bias toward basic and acidic residues.

In terms of assembly, forms oligomers. In terms of tissue distribution, expressed in roots, hypocotyls, leaves, stems and floral buds, and, at low levels, in siliques.

It is found in the vacuole membrane. In terms of biological role, involved in vacuolar formation or function (e.g. formation of vacuolar membrane 'bulbs'). Required for amyloplast sedimentation in the endodermis during shoot gravitropism, which are thus acting as statoliths. Particularly important for the negative gravitropism leading to leaf movement observed in darkness. The chain is Phospholipase SGR2 (SGR2) from Arabidopsis thaliana (Mouse-ear cress).